The sequence spans 156 residues: Arginine repressor (156 aa).

It belongs to the ArgR family.

It localises to the cytoplasm. It participates in amino-acid biosynthesis; L-arginine biosynthesis [regulation]. Its function is as follows. Regulates arginine biosynthesis genes. This is Arginine repressor from Shewanella frigidimarina (strain NCIMB 400).